A 61-amino-acid chain; its full sequence is Large ribosomal subunit protein uL30 (61 aa).

This sequence belongs to the universal ribosomal protein uL30 family. As to quaternary structure, part of the 50S ribosomal subunit.

The sequence is that of Large ribosomal subunit protein uL30 from Bordetella parapertussis (strain 12822 / ATCC BAA-587 / NCTC 13253).